Reading from the N-terminus, the 381-residue chain is Succinyl-diaminopimelate desuccinylase (381 aa).

His72 contributes to the Zn(2+) binding site. The active site involves Asp74. Residue Asp103 coordinates Zn(2+). Glu133 serves as the catalytic Proton acceptor. 3 residues coordinate Zn(2+): Glu134, Glu163, and His348.

Belongs to the peptidase M20A family. DapE subfamily. As to quaternary structure, homodimer. Requires Zn(2+) as cofactor. Co(2+) serves as cofactor.

It carries out the reaction N-succinyl-(2S,6S)-2,6-diaminopimelate + H2O = (2S,6S)-2,6-diaminopimelate + succinate. It functions in the pathway amino-acid biosynthesis; L-lysine biosynthesis via DAP pathway; LL-2,6-diaminopimelate from (S)-tetrahydrodipicolinate (succinylase route): step 3/3. Functionally, catalyzes the hydrolysis of N-succinyl-L,L-diaminopimelic acid (SDAP), forming succinate and LL-2,6-diaminopimelate (DAP), an intermediate involved in the bacterial biosynthesis of lysine and meso-diaminopimelic acid, an essential component of bacterial cell walls. The polypeptide is Succinyl-diaminopimelate desuccinylase (Anaplasma marginale (strain Florida)).